Consider the following 230-residue polypeptide: TPR repeat-containing protein BB_0298 (230 aa).

2 TPR repeats span residues 69–102 (ARFFNLIGLEFFKLGQYGPAIEYFAKNLEINPNN) and 183–216 (FEFLMLRGANYYSLGDLGNAILFYDKASKKASTE).

This chain is TPR repeat-containing protein BB_0298, found in Borreliella burgdorferi (strain ATCC 35210 / DSM 4680 / CIP 102532 / B31) (Borrelia burgdorferi).